A 213-amino-acid chain; its full sequence is Peptide methionine sulfoxide reductase MsrA (213 aa).

The active site involves cysteine 53.

The protein belongs to the MsrA Met sulfoxide reductase family.

The enzyme catalyses L-methionyl-[protein] + [thioredoxin]-disulfide + H2O = L-methionyl-(S)-S-oxide-[protein] + [thioredoxin]-dithiol. It catalyses the reaction [thioredoxin]-disulfide + L-methionine + H2O = L-methionine (S)-S-oxide + [thioredoxin]-dithiol. Functionally, has an important function as a repair enzyme for proteins that have been inactivated by oxidation. Catalyzes the reversible oxidation-reduction of methionine sulfoxide in proteins to methionine. In Serratia proteamaculans (strain 568), this protein is Peptide methionine sulfoxide reductase MsrA.